A 392-amino-acid polypeptide reads, in one-letter code: Probable protein phosphatase 2C 22 (392 aa).

The tract at residues 1-26 (MEETRGISDPENGSSSYGGKPPNPLS) is disordered. Residues 89–356 (RSGAWSDIGS…DNVTAVVVCL (268 aa)) form the PPM-type phosphatase domain. Residues aspartate 133, glycine 134, aspartate 304, and aspartate 347 each coordinate Mn(2+).

The protein belongs to the PP2C family. Mg(2+) is required as a cofactor. The cofactor is Mn(2+).

The enzyme catalyses O-phospho-L-seryl-[protein] + H2O = L-seryl-[protein] + phosphate. The catalysed reaction is O-phospho-L-threonyl-[protein] + H2O = L-threonyl-[protein] + phosphate. The polypeptide is Probable protein phosphatase 2C 22 (Arabidopsis thaliana (Mouse-ear cress)).